The following is a 913-amino-acid chain: Bifunctional uridylyltransferase/uridylyl-removing enzyme (913 aa).

The interval 1-358 (MFNCDVTAID…PDEERPKKQP (358 aa)) is uridylyltransferase. The segment at 359–729 (INARFNQVGD…EHRELALDAV (371 aa)) is uridylyl-removing. The region spanning 476–592 (VDAHTLFLIR…TLFADLVGNV (117 aa)) is the HD domain. ACT domains are found at residues 730 to 815 (QVFV…RIPR) and 838 to 913 (IMSL…NDRV).

The protein belongs to the GlnD family. The cofactor is Mg(2+).

It carries out the reaction [protein-PII]-L-tyrosine + UTP = [protein-PII]-uridylyl-L-tyrosine + diphosphate. It catalyses the reaction [protein-PII]-uridylyl-L-tyrosine + H2O = [protein-PII]-L-tyrosine + UMP + H(+). Uridylyltransferase (UTase) activity is inhibited by glutamine, while glutamine activates uridylyl-removing (UR) activity. In terms of biological role, modifies, by uridylylation and deuridylylation, the PII regulatory proteins (GlnB and homologs), in response to the nitrogen status of the cell that GlnD senses through the glutamine level. Under low glutamine levels, catalyzes the conversion of the PII proteins and UTP to PII-UMP and PPi, while under higher glutamine levels, GlnD hydrolyzes PII-UMP to PII and UMP (deuridylylation). Thus, controls uridylylation state and activity of the PII proteins, and plays an important role in the regulation of nitrogen assimilation and metabolism. The sequence is that of Bifunctional uridylyltransferase/uridylyl-removing enzyme from Psychrobacter cryohalolentis (strain ATCC BAA-1226 / DSM 17306 / VKM B-2378 / K5).